We begin with the raw amino-acid sequence, 384 residues long: 1-deoxy-D-xylulose 5-phosphate reductoisomerase (384 aa).

Positions 10, 11, 12, 13, 38, and 120 each coordinate NADPH. Residue lysine 121 participates in 1-deoxy-D-xylulose 5-phosphate binding. Position 122 (glutamate 122) interacts with NADPH. Aspartate 146 lines the Mn(2+) pocket. 1-deoxy-D-xylulose 5-phosphate contacts are provided by serine 147, glutamate 148, serine 172, and histidine 195. Mn(2+) is bound at residue glutamate 148. An NADPH-binding site is contributed by glycine 201. 4 residues coordinate 1-deoxy-D-xylulose 5-phosphate: serine 208, asparagine 213, lysine 214, and glutamate 217. Glutamate 217 provides a ligand contact to Mn(2+).

The protein belongs to the DXR family. Mg(2+) is required as a cofactor. Mn(2+) serves as cofactor.

It catalyses the reaction 2-C-methyl-D-erythritol 4-phosphate + NADP(+) = 1-deoxy-D-xylulose 5-phosphate + NADPH + H(+). The protein operates within isoprenoid biosynthesis; isopentenyl diphosphate biosynthesis via DXP pathway; isopentenyl diphosphate from 1-deoxy-D-xylulose 5-phosphate: step 1/6. Catalyzes the NADPH-dependent rearrangement and reduction of 1-deoxy-D-xylulose-5-phosphate (DXP) to 2-C-methyl-D-erythritol 4-phosphate (MEP). This is 1-deoxy-D-xylulose 5-phosphate reductoisomerase from Protochlamydia amoebophila (strain UWE25).